A 357-amino-acid chain; its full sequence is Phenylalanine--tRNA ligase alpha subunit (357 aa).

Glu259 contributes to the Mg(2+) binding site.

It belongs to the class-II aminoacyl-tRNA synthetase family. Phe-tRNA synthetase alpha subunit type 1 subfamily. As to quaternary structure, tetramer of two alpha and two beta subunits. Mg(2+) serves as cofactor.

Its subcellular location is the cytoplasm. It carries out the reaction tRNA(Phe) + L-phenylalanine + ATP = L-phenylalanyl-tRNA(Phe) + AMP + diphosphate + H(+). The polypeptide is Phenylalanine--tRNA ligase alpha subunit (Jannaschia sp. (strain CCS1)).